The following is a 576-amino-acid chain: Immunoglobulin mu heavy chain (576 aa).

Glutamine 1 bears the Pyrrolidone carboxylic acid mark. 5 consecutive Ig-like domains span residues 1–97, 132–212, 236–334, 352–442, and 452–553; these read QVTL…TYYC, PTLF…EHVC, PKVS…QNAS, PSFA…QTIS, and PDVY…RTVD. The variable (V) domain, involved in antigen recognition stretch occupies residues 1–124; the sequence is QVTLTESGPA…VWGKGTTVTV (124 aa). 3 disulfides stabilise this stretch: cysteine 22–cysteine 97, cysteine 153–cysteine 212, and cysteine 259–cysteine 320. N-linked (GlcNAc...) asparagine glycosylation is found at asparagine 74 and asparagine 170. The segment at 125–576 is constant (C) domain; it reads SSGSASAPTL…VMSDTAGTCY (452 aa). N-linked (GlcNAc...) asparagine glycosylation is found at asparagine 332, asparagine 395, and asparagine 402. Intrachain disulfides connect cysteine 367–cysteine 426 and cysteine 474–cysteine 536. Asparagine 563 carries N-linked (GlcNAc...) asparagine glycosylation.

Immunoglobulins are composed of two identical heavy chains and two identical light chains; disulfide-linked. It is found almost exclusively as a homopentamer in the serum. Membrane-bound IgM molecules are non-covalently associated with heterodimer of CD79A and CD79B.

The protein resides in the secreted. Its subcellular location is the cell membrane. Immunoglobulins, also known as antibodies, are membrane-bound or secreted glycoproteins produced by B lymphocytes. In the recognition phase of humoral immunity, the membrane-bound immunoglobulins serve as receptors which, upon binding of a specific antigen, trigger the clonal expansion and differentiation of B lymphocytes into immunoglobulins-secreting plasma cells. Secreted immunoglobulins mediate the effector phase of humoral immunity, which results in the elimination of bound antigens. The antigen binding site is formed by the variable domain of one heavy chain, together with that of its associated light chain. Thus, each immunoglobulin has two antigen binding sites with remarkable affinity for a particular antigen. The variable domains are assembled by a process called V-(D)-J rearrangement and can then be subjected to somatic hypermutations which, after exposure to antigen and selection, allow affinity maturation for a particular antigen. IgM antibodies play an important role in primary defense mechanisms. They have been shown to be involved in early recognition of external invaders like bacteria and viruses, cellular waste and modified self, as well as in recognition and elimination of precancerous and cancerous lesions. The membrane-bound form is found in the majority of normal B cells alongside with IgD. Membrane-bound IgM induces the phosphorylation of CD79A and CD79B by the Src family of protein tyrosine kinases. It may cause death of cells by apoptosis. It is also found in soluble form, which represents about 30% of the total serum immunoglobulins where it is found almost exclusively as a homopentamer. After the antigen binds to the B cell receptor, the secreted form is secreted in large amounts (, PubMed:16895553). This is Immunoglobulin mu heavy chain from Homo sapiens (Human).